Here is a 498-residue protein sequence, read N- to C-terminus: Glutamate--tRNA ligase (498 aa).

Positions 10–20 (PSPTGYFHIGG) match the 'HIGH' region motif. A 'KMSKS' region motif is present at residues 252-256 (KLSKR). Lys-255 provides a ligand contact to ATP.

This sequence belongs to the class-I aminoacyl-tRNA synthetase family. Glutamate--tRNA ligase type 1 subfamily. Monomer.

Its subcellular location is the cytoplasm. It catalyses the reaction tRNA(Glu) + L-glutamate + ATP = L-glutamyl-tRNA(Glu) + AMP + diphosphate. Catalyzes the attachment of glutamate to tRNA(Glu) in a two-step reaction: glutamate is first activated by ATP to form Glu-AMP and then transferred to the acceptor end of tRNA(Glu). This Mycoplasmoides gallisepticum (strain R(low / passage 15 / clone 2)) (Mycoplasma gallisepticum) protein is Glutamate--tRNA ligase.